We begin with the raw amino-acid sequence, 76 residues long: Putative snRNP Sm-like protein (76 aa).

The 73-residue stretch at 4 to 76 (RPLDVIHRSL…VLAISPVDIE (73 aa)) folds into the Sm domain.

This sequence belongs to the snRNP Sm proteins family.

The polypeptide is Putative snRNP Sm-like protein (Thermococcus gammatolerans (strain DSM 15229 / JCM 11827 / EJ3)).